The sequence spans 683 residues: MSEPRKILVTSALPYANGSIHLGHMLEYIQTDMWVRFQKHRGNQCIYVCADDAHGSAIMLRAEKEGITPEQLIANVQAEHSADFAEFLVDFDNFHSTHAEENRELSSQIYLKLRDAGHIAQRSITQYFDPEKKMFLADRFIKGTCPKCGTEDQYGDNCEKCGATYAPTDLKDPKSAISGATPVLKDSQHFFFKLPDFQEMLQAWTRSGTLQDAVANKIAEWLDAGLQQWDISRDAPYFGFEIPGEPGKYFYVWLDAPIGYMASFKNLCNRTPELDFDAFWGKDSTAELYHFIGKDIVNFHALFWPAMLEGAGFRKPTGINVHGYLTVNGQKMSKSRGTFIKARTYLDHLSPEYLRYYYAAKLGRGVDDLDLNLEDFVQKVNSDLVGKVVNIASRCAGFIQKGNAGLLVDTNAAPELTEAFLAAAPSIADAYEARDFARAMRETMALADRANAWIADKAPWSLNKQEGKQDEVQAVCATAINLFRQLVIFLKPVLPVLAADAEAFLNVAPLTWNDHTTLLANHQLNEFKPLMTRIDPVKVQAMTDASKEDLTASQTDTGAAAPAGNGELAKDPLSPEIDFDTFAAVDLRVALIVKAEHVEGADKLLRLTLDIGDEQRNVFSGIKSAYPDPSKLDGRLTMMIANLKPRKMKFGISEGMVMAAGPGGEEIYLLSPDSGAKPGQRIK.

Positions Pro14–His24 match the 'HIGH' region motif. Residues Cys145, Cys148, Cys158, and Cys161 each contribute to the Zn(2+) site. A 'KMSKS' region motif is present at residues Lys331–Ser335. Lys334 provides a ligand contact to ATP. The segment at Ala545–Pro572 is disordered. Residues Thr581–Lys683 form the tRNA-binding domain.

Belongs to the class-I aminoacyl-tRNA synthetase family. MetG type 1 subfamily. Homodimer. Zn(2+) is required as a cofactor.

The protein localises to the cytoplasm. It catalyses the reaction tRNA(Met) + L-methionine + ATP = L-methionyl-tRNA(Met) + AMP + diphosphate. Is required not only for elongation of protein synthesis but also for the initiation of all mRNA translation through initiator tRNA(fMet) aminoacylation. This is Methionine--tRNA ligase from Pseudomonas fluorescens (strain Pf0-1).